Consider the following 599-residue polypeptide: Beta-(1--&gt;2)glucan export ATP-binding/permease protein NdvA (599 aa).

An ABC transmembrane type-1 domain is found at 21-311 (GWILAVANLL…VVNFINNVLM (291 aa)). The next 6 membrane-spanning stretches (helical) occupy residues 22–42 (WILA…PILF), 68–88 (LLGA…LVAL), 146–166 (EHFA…YINW), 168–188 (LAIL…LVVH), 254–274 (VITR…GIYL), and 276–296 (QQGL…TLLI). The 235-residue stretch at 345–579 (VEFQNVSFSY…GGAFAQLARA (235 aa)) folds into the ABC transporter domain. 378–385 (GATGAGKS) is a binding site for ATP.

The protein belongs to the ABC transporter superfamily. Beta-(1--&gt;2)glucan exporter (TC 3.A.1.108.1) family. In terms of assembly, homodimer.

It is found in the cell inner membrane. The enzyme catalyses [(1-&gt;2)-beta-D-glucosyl](n)(in) + ATP + H2O = [(1-&gt;2)-beta-D-glucosyl](n)(out) + ADP + phosphate + H(+). Involved in beta-(1--&gt;2)glucan export. Transmembrane domains (TMD) form a pore in the inner membrane and the ATP-binding domain (NBD) is responsible for energy generation. This is Beta-(1--&gt;2)glucan export ATP-binding/permease protein NdvA from Rhodopseudomonas palustris (strain ATCC BAA-98 / CGA009).